A 497-amino-acid chain; its full sequence is CRISPR-associated endodeoxyribonuclease Cas12f1 (497 aa).

Residues 29–122 are recognition domain (REC); the sequence is RKDLSTMSRF…PTYKITTAPI (94 aa). A wedge domain (WED) region spans residues 123–214; sequence RLQNNIYKLI…YCIIPYTFPT (92 aa). The segment at 215 to 223 is linker; it reads HETVLDPDK. The segment at 224–374 is ruvC-I; that stretch reads VMGVDLGVAK…VAINPQYTSQ (151 aa). Catalysis depends on residues Asp228 and Glu327. Residues 375 to 432 are target nucleic acid-binding (TNB); the sequence is RCSMCGYIEKTNRSSQAVFECKQCGYGSRTICINCRHVQVSGDVCEECGGIVKKENVN. Residues Cys376, Cys379, Cys395, and Cys398 each contribute to the Zn(2+) site. The interval 433–453 is ruvC-II; the sequence is ADYNAAKNISTPYIDQIIMEK. Asp434 is an active-site residue.

The protein belongs to the CRISPR-associated endonuclease Cas12f family. In terms of assembly, an asymmetric homodimer. Guide RNA is probably required for dimerization. Mg(2+) is required as a cofactor. Requires Zn(2+) as cofactor.

CRISPR (clustered regularly interspaced short palindromic repeat), is an adaptive immune system that provides protection against mobile genetic elements (viruses, transposable elements and conjugative plasmids). CRISPR clusters contain sequences complementary to antecedent mobile elements and target invading nucleic acids. CRISPR clusters are transcribed and processed into CRISPR RNA (crRNA), which requires a trans-encoded small RNA (tracrRNA), but not this protein. Recognizes a short motif in the CRISPR repeat sequences (the 5' PAM or protospacer adjacent motif, TTC in this organism) to help distinguish self versus nonself, as targets within the CRISPR locus do not have PAMs. Has dsDNA endonuclease activity upon expression in E.coli of this protein, a mini CRISPR array and the probable tracrRNA. Plasmid cleavage is centered around positions 24 base pairs 3' of PAM. The mini system protects E.coli against transformation by foreign plasmids. The protein is CRISPR-associated endodeoxyribonuclease Cas12f1 of Syntrophomonas palmitatica (strain DSM 18709 / JCM 14374 / NBRC 102128 / MPA).